The primary structure comprises 304 residues: Tyrosine recombinase XerC (304 aa).

One can recognise a Core-binding (CB) domain in the interval 6–92 (NKLYLQAQAY…VLRQWFAYLV (87 aa)). The region spanning 113 to 292 (HLPKNIDAER…DFQHLAKIYD (180 aa)) is the Tyr recombinase domain. Residues Arg152, Lys176, His244, Arg247, and His270 contribute to the active site. Tyr279 functions as the O-(3'-phospho-DNA)-tyrosine intermediate in the catalytic mechanism.

This sequence belongs to the 'phage' integrase family. XerC subfamily. As to quaternary structure, forms a cyclic heterotetrameric complex composed of two molecules of XerC and two molecules of XerD.

The protein localises to the cytoplasm. Its function is as follows. Site-specific tyrosine recombinase, which acts by catalyzing the cutting and rejoining of the recombining DNA molecules. The XerC-XerD complex is essential to convert dimers of the bacterial chromosome into monomers to permit their segregation at cell division. It also contributes to the segregational stability of plasmids. The polypeptide is Tyrosine recombinase XerC (Haemophilus ducreyi (strain 35000HP / ATCC 700724)).